We begin with the raw amino-acid sequence, 107 residues long: Ferredoxin 1 (107 aa).

4Fe-4S ferredoxin-type domains lie at 2–30 (TFVV…YEGP) and 31–60 (NFLV…SEDE). [3Fe-4S] cluster contacts are provided by C9 and C17. C21, C40, C43, and C46 together coordinate [4Fe-4S] cluster. Residue C50 participates in [3Fe-4S] cluster binding.

[4Fe-4S] cluster serves as cofactor. Requires [3Fe-4S] cluster as cofactor.

Its function is as follows. Ferredoxins are iron-sulfur proteins that transfer electrons in a wide variety of metabolic reactions. This is Ferredoxin 1 (fdxA) from Pseudomonas putida (strain ATCC 47054 / DSM 6125 / CFBP 8728 / NCIMB 11950 / KT2440).